A 126-amino-acid chain; its full sequence is Histone H2B 5 (126 aa).

Residues 1–12 (MPEPAKSAPAPK) are compositionally biased toward low complexity. Residues 1–35 (MPEPAKSAPAPKKGSKKAVTKTQKKGDKKRRKSRK) form a disordered region. N6-acetyllysine occurs at positions 6 and 13. Positions 13–34 (KGSKKAVTKTQKKGDKKRRKSR) are enriched in basic residues. A Phosphoserine modification is found at Ser15. An N6-acetyllysine mark is found at Lys16 and Lys21. O-linked (GlcNAc) serine glycosylation is present at Ser113. Lys121 participates in a covalent cross-link: Glycyl lysine isopeptide (Lys-Gly) (interchain with G-Cter in ubiquitin).

It belongs to the histone H2B family. The nucleosome is a histone octamer containing two molecules each of H2A, H2B, H3 and H4 assembled in one H3-H4 heterotetramer and two H2A-H2B heterodimers. The octamer wraps approximately 147 bp of DNA. In terms of processing, monoubiquitination of Lys-121 by the BRE1 gives a specific tag for epigenetic transcriptional activation and is also prerequisite for histone H3 'Lys-4' and 'Lys-79' methylation. Post-translationally, phosphorylated on Ser-15 during apoptosis; which facilitates apoptotic chromatin condensation. GlcNAcylation at Ser-113 promotes monoubiquitination of Lys-121. It fluctuates in response to extracellular glucose, and associates with transcribed genes.

It is found in the nucleus. Its subcellular location is the chromosome. In terms of biological role, core component of nucleosome. Nucleosomes wrap and compact DNA into chromatin, limiting DNA accessibility to the cellular machineries which require DNA as a template. Histones thereby play a central role in transcription regulation, DNA repair, DNA replication and chromosomal stability. DNA accessibility is regulated via a complex set of post-translational modifications of histones, also called histone code, and nucleosome remodeling. This Gallus gallus (Chicken) protein is Histone H2B 5 (H2B-V).